The primary structure comprises 589 residues: Outer envelope protein 64, chloroplastic (589 aa).

Position 1 (Met-1) is a topological domain, chloroplast intermembrane. A helical membrane pass occupies residues 2–22 (ASQAANLWVLLGLGLAGILML). Over 23-141 (TKKLKKTVRE…NPAAPTRIPG (119 aa)) the chain is Cytoplasmic. A helical transmembrane segment spans residues 142-162 (GACSGAAVAVATNAVDFALGI). Over 163 to 398 (DTVGGVRVPA…EITSEDYQNR (236 aa)) the chain is Chloroplast intermembrane. Residues 399 to 419 (ASSLLSIASISGCCQVTVPLG) traverse the membrane as a helical segment. Over 420–589 (HHEKCPISVS…LSAERLRKFQ (170 aa)) the chain is Cytoplasmic. 3 TPR repeats span residues 474 to 507 (AEIA…SDNN), 508 to 541 (ATYY…DKKN), and 542 to 575 (VKAY…EPNN).

As to quaternary structure, part of the Toc complex and of the intermembrane space complex. Expressed in roots, cotyledons, leaves and flower buds.

Its subcellular location is the plastid. The protein resides in the chloroplast outer membrane. In terms of biological role, chaperone receptor mediating Hsp90-dependent protein targeting to chloroplasts. Bi-functional preprotein receptor acting on both sides of the membrane. Not essential for an efficient import of pre-proteins into plastids. This is Outer envelope protein 64, chloroplastic (OEP64) from Arabidopsis thaliana (Mouse-ear cress).